The following is a 74-amino-acid chain: uncharacterized protein (74 aa).

A disordered region spans residues 39–74 (SSPQAPGTLKPRALVRPSPGPVQENHLSEAQFPPKL).

This is an uncharacterized protein from Homo sapiens (Human).